A 335-amino-acid polypeptide reads, in one-letter code: tRNA N6-adenosine threonylcarbamoyltransferase (335 aa).

2 residues coordinate Fe cation: histidine 110 and histidine 114. Substrate contacts are provided by residues 132 to 136, aspartate 165, glycine 178, and asparagine 271; that span reads LVSGG. Fe cation is bound at residue aspartate 299.

This sequence belongs to the KAE1 / TsaD family. It depends on Fe(2+) as a cofactor.

The protein localises to the cytoplasm. It carries out the reaction L-threonylcarbamoyladenylate + adenosine(37) in tRNA = N(6)-L-threonylcarbamoyladenosine(37) in tRNA + AMP + H(+). Functionally, required for the formation of a threonylcarbamoyl group on adenosine at position 37 (t(6)A37) in tRNAs that read codons beginning with adenine. Is involved in the transfer of the threonylcarbamoyl moiety of threonylcarbamoyl-AMP (TC-AMP) to the N6 group of A37, together with TsaE and TsaB. TsaD likely plays a direct catalytic role in this reaction. The chain is tRNA N6-adenosine threonylcarbamoyltransferase from Campylobacter jejuni subsp. doylei (strain ATCC BAA-1458 / RM4099 / 269.97).